The following is a 1950-amino-acid chain: E3 ubiquitin-protein ligase UBR1 (1950 aa).

Residues histidine 118, cysteine 123, cysteine 136, cysteine 139, cysteine 148, cysteine 151, histidine 157, histidine 160, histidine 161, cysteine 175, cysteine 177, and cysteine 189 each coordinate Zn(2+). The segment at 121–194 (RNCGRKFKIG…SPLHCKAEEQ (74 aa)) adopts a UBR-type zinc-finger fold. Residues serine 296 and serine 300 each carry the phosphoserine modification. The tract at residues 678–681 (HVLH) is ubiquitin-binding loop. Zn(2+) is bound at residue aspartate 952. The UBC2-binding region (U2BR) stretch occupies residues 1165 to 1200 (KERKRRLAKKHQARLLAKFNNQQTKFMKEHESEFDE). Zn(2+) contacts are provided by cysteine 1220, cysteine 1223, cysteine 1295, histidine 1297, histidine 1300, cysteine 1303, cysteine 1320, and cysteine 1323. Residues 1220 to 1324 (CALCQDSSST…SNAFICPLCQ (105 aa)) form an RING-type; atypical zinc finger. The tract at residues 1333–1665 (LCQTSKANTG…YEYCGIIKLI (333 aa)) is cap helical domain (CHD). Zn(2+) contacts are provided by cysteine 1703, cysteine 1706, histidine 1722, cysteine 1727, histidine 1763, and aspartate 1775. Disordered stretches follow at residues 1826 to 1846 (RPRR…GEDG) and 1893 to 1950 (TLQP…REIW). Acidic residues-rich tracts occupy residues 1833–1846 (TDED…GEDG) and 1934–1950 (DEDD…REIW). Residue serine 1938 is modified to Phosphoserine.

The protein belongs to the E3 ubiquitin-protein ligase UBR1-like family. As to quaternary structure, interacts with UBC2. Interacts with RPN2, RPT1 and RPT6 from the 26S proteasome.

The catalysed reaction is S-ubiquitinyl-[E2 ubiquitin-conjugating enzyme]-L-cysteine + [acceptor protein]-L-lysine = [E2 ubiquitin-conjugating enzyme]-L-cysteine + N(6)-ubiquitinyl-[acceptor protein]-L-lysine.. It functions in the pathway protein modification; protein ubiquitination. Ubiquitin ligase protein which is a component of the N-end rule pathway. Recognizes and binds to proteins bearing specific N-terminal residues that are destabilizing according to the N-end rule, leading to their ubiquitination and subsequent degradation. Recognizes both type-1 and type-2 N-degrons, containing positively charged amino acids (Arg, Lys and His) and bulky and hydrophobic amino acids, respectively. The protein is E3 ubiquitin-protein ligase UBR1 of Saccharomyces cerevisiae (strain ATCC 204508 / S288c) (Baker's yeast).